Here is a 314-residue protein sequence, read N- to C-terminus: ATP synthase gamma chain (314 aa).

Belongs to the ATPase gamma chain family. As to quaternary structure, F-type ATPases have 2 components, CF(1) - the catalytic core - and CF(0) - the membrane proton channel. CF(1) has five subunits: alpha(3), beta(3), gamma(1), delta(1), epsilon(1). CF(0) has three main subunits: a, b and c.

It localises to the cellular thylakoid membrane. In terms of biological role, produces ATP from ADP in the presence of a proton gradient across the membrane. The gamma chain is believed to be important in regulating ATPase activity and the flow of protons through the CF(0) complex. This Picosynechococcus sp. (strain ATCC 27264 / PCC 7002 / PR-6) (Agmenellum quadruplicatum) protein is ATP synthase gamma chain.